Consider the following 426-residue polypeptide: MSKSENLYSAARELIPGGVNSPVRAFTGVGGTPLFIEKADGAYLYDVDGKAYIDYVGSWGPMVLGHNHPAIRNAVIEAAERGLSFGAPTEMEVKMAELVTNLVPTMDMVRMVNSGTEATMSAIRLARGFTGRDKIIKFEGCYHGHADCLLVKAGSGALTLGQPNSPGVPADFAKHTLTCTYNDLTSVRAAFEQYPQEIACIIVEPVAGNMNCIPPLPEFLPGLRALCDEFGALLIIDEVMTGFRVALAGAQDYYGVVPDLTCLGKIIGGGMPVGAFGGRRDVMDALAPTGPVYQAGTLSGNPIAMAAGFACLNEVAQPGIHETLDELTTRLAEGLLEAAEEANIPLVVNHVGGMFGIFFTDAESVTCYQDVMACDVERFKRFFHLMLEEGVYLAPSAFEAGFMSVAHSEEDINNTIDAARRVFAKL.

Lysine 265 is subject to N6-(pyridoxal phosphate)lysine.

It belongs to the class-III pyridoxal-phosphate-dependent aminotransferase family. HemL subfamily. Homodimer. Requires pyridoxal 5'-phosphate as cofactor.

It localises to the cytoplasm. It catalyses the reaction (S)-4-amino-5-oxopentanoate = 5-aminolevulinate. The protein operates within porphyrin-containing compound metabolism; protoporphyrin-IX biosynthesis; 5-aminolevulinate from L-glutamyl-tRNA(Glu): step 2/2. The chain is Glutamate-1-semialdehyde 2,1-aminomutase from Salmonella enteritidis PT4 (strain P125109).